The primary structure comprises 214 residues: Ornithine decarboxylase antizyme 1 (214 aa).

Belongs to the ODC antizyme family. Interacts with ODC1 and thereby sterically blocks ODC homodimerization.

Ornithine decarboxylase (ODC) antizyme protein that negatively regulates ODC activity and intracellular polyamine biosynthesis and uptake in response to increased intracellular polyamine levels. Binds to ODC monomers, inhibiting the assembly of the functional ODC homodimer, and targets the monomers for ubiquitin-independent proteolytic destruction by the 26S proteasome. The chain is Ornithine decarboxylase antizyme 1 (oaz1a) from Danio rerio (Zebrafish).